Here is a 274-residue protein sequence, read N- to C-terminus: Large ribosomal subunit protein uL2 (274 aa).

The interval 223–274 (VAMNPVDHPHGGGEGKTSGGRHPVSPWGVPTKGYKTRSNKRTDKFIVRRRAK) is disordered.

This sequence belongs to the universal ribosomal protein uL2 family. As to quaternary structure, part of the 50S ribosomal subunit. Forms a bridge to the 30S subunit in the 70S ribosome.

Functionally, one of the primary rRNA binding proteins. Required for association of the 30S and 50S subunits to form the 70S ribosome, for tRNA binding and peptide bond formation. It has been suggested to have peptidyltransferase activity; this is somewhat controversial. Makes several contacts with the 16S rRNA in the 70S ribosome. This Colwellia psychrerythraea (strain 34H / ATCC BAA-681) (Vibrio psychroerythus) protein is Large ribosomal subunit protein uL2.